A 192-amino-acid polypeptide reads, in one-letter code: Glycerol-3-phosphate acyltransferase (192 aa).

The next 5 membrane-spanning stretches (helical) occupy residues 4–24 (MFWL…AILL), 54–74 (LAIL…LIAS), 80–100 (IAQQ…PVYF), 112–132 (AGVL…AWLL), and 154–174 (LLAW…LLIV).

It belongs to the PlsY family. As to quaternary structure, probably interacts with PlsX.

It localises to the cell inner membrane. It carries out the reaction an acyl phosphate + sn-glycerol 3-phosphate = a 1-acyl-sn-glycero-3-phosphate + phosphate. It participates in lipid metabolism; phospholipid metabolism. Its function is as follows. Catalyzes the transfer of an acyl group from acyl-phosphate (acyl-PO(4)) to glycerol-3-phosphate (G3P) to form lysophosphatidic acid (LPA). This enzyme utilizes acyl-phosphate as fatty acyl donor, but not acyl-CoA or acyl-ACP. The protein is Glycerol-3-phosphate acyltransferase of Pseudomonas syringae pv. syringae (strain B728a).